The primary structure comprises 443 residues: Tol-Pal system protein TolB (443 aa).

An N-terminal signal peptide occupies residues 1 to 18 (MRNIVYFILTLFSLTSYA).

This sequence belongs to the TolB family. The Tol-Pal system is composed of five core proteins: the inner membrane proteins TolA, TolQ and TolR, the periplasmic protein TolB and the outer membrane protein Pal. They form a network linking the inner and outer membranes and the peptidoglycan layer.

Its subcellular location is the periplasm. In terms of biological role, part of the Tol-Pal system, which plays a role in outer membrane invagination during cell division and is important for maintaining outer membrane integrity. The sequence is that of Tol-Pal system protein TolB from Rickettsia prowazekii (strain Madrid E).